The sequence spans 1530 residues: Neurexin-1 (1530 aa).

An N-terminal signal peptide occupies residues 1–30 (MGTALVQHGGCCLLCLSLLLLGCWAELGSG). The Laminin G-like 1 domain maps to 31 to 217 (LEFPGAEGQW…PPNSGGGSPC (187 aa)). Over 31–1454 (LEFPGAEGQW…EVIRESSSTT (1424 aa)) the chain is Extracellular. N-linked (GlcNAc...) asparagine glycans are attached at residues N125 and N190. The segment at 196-219 (PVDGSEVKLDEEPPNSGGGSPCEA) is disordered. In terms of domain architecture, EGF-like 1 spans 213–255 (GGSPCEAGDEGDGGVCLNGGVCSVVDDQAVCDCSRTGFRGKDC). 2 cysteine pairs are disulfide-bonded: C228–C243 and C245–C255. 2 consecutive Laminin G-like domains span residues 299–496 (IATF…AFKC) and 503–695 (DPIT…KPSC). Residues D345, L362, and M430 each coordinate Ca(2+). Intrachain disulfides connect C460/C496, C666/C695, C703/C714, C708/C723, and C725/C735. The EGF-like 2 domain maps to 699-736 (TAKPCLSNPCKNNGMCRDGWNRYVCDCSGTGYLGRSCE). Laminin G-like domains follow at residues 741–914 (VLSY…IDYC) and 928–1103 (DPVT…ERGC). The Ca(2+) site is built by D788 and L805. N813 is a glycosylation site (N-linked (GlcNAc...) asparagine). A Ca(2+)-binding site is contributed by R864. 5 disulfides stabilise this stretch: C906-C914, C1075-C1103, C1110-C1121, C1115-C1130, and C1132-C1142. Residues 1106–1143 (PSTTCQEDSCSNQGVCLQQWDGFSCDCSMTSFSGPLCN) form the EGF-like 3 domain. In terms of domain architecture, Laminin G-like 6 spans 1149-1347 (YIFSKGGGQI…DANIAIVGNV (199 aa)). Ca(2+) is bound by residues D1199 and V1216. N1246 carries an N-linked (GlcNAc...) asparagine glycan. Residues I1298 and N1300 each contribute to the Ca(2+) site. A glycan (O-linked (Xyl...) (heparan sulfate) serine) is linked at S1408. A disordered region spans residues 1412–1443 (PSDDEDIDPCEPSSGGLANPTRVGGREPYPGS). A helical membrane pass occupies residues 1455 to 1475 (GMVVGIVAAAALCILILLYAM). Topologically, residues 1476 to 1530 (YKYRNRDEGSYHVDESRNYISNSAQSNGAVVKEKQPSSAKSANKNKKNKDKEYYV) are cytoplasmic. The interaction with CASK stretch occupies residues 1497 to 1523 (NSAQSNGAVVKEKQPSSAKSANKNKKN). The tract at residues 1497-1530 (NSAQSNGAVVKEKQPSSAKSANKNKKNKDKEYYV) is disordered.

It belongs to the neurexin family. As to quaternary structure, interacts (via laminin G-like domain 2 and/or laminin G-like domain 6) with NLGN1 forming a heterotetramer, where one NLGN1 dimer interacts with one NRXN1 dimer. Also interacts (via laminin G-like domain 2 and/or laminin G-like domain 6) with NLGN2, NLGN3 and NLGN4L; interactions with NLGN1, NLGN2, NLGN3 and NLGN4L are calcium-dependent. Interacts (via cytoplasmic C-terminal region) with CASK (via the PDZ, SH3 and guanylate kinase-like domains). Interacts (via cytoplasmic C-terminus) with CASKIN1 and APBA1. Interacts (via laminin G-like domain 2) with NXPH1 and NXPH3. Alpha-type isoforms (neurexin-1-alpha) interact (via laminin G-like domain 2 and/or laminin G-like domain 6) with DAG1 (via alpha-dystroglycan chain). Interacts with LRRTM1, LRRTM2, LRRTM3 and LRRTM4. Interacts with SYT13 and SYTL1. Interacts with CBLN1, CBLN2 and, less avidly, with CBLN4. Interacts with CLSTN3. Alpha-type isoforms interact with alpha-latrotoxin from spider venom. Post-translationally, O-glycosylated; contains heparan sulfate. Heparan sulfate attachment is required for synapse development by mediating interactions with neuroligins and LRRTM2. In terms of tissue distribution, brain (neuronal synapse).

It localises to the presynaptic cell membrane. Cell surface protein involved in cell-cell-interactions, exocytosis of secretory granules and regulation of signal transmission. Function is isoform-specific. Alpha-type isoforms have a long N-terminus with six laminin G-like domains and play an important role in synaptic signal transmission. Alpha-type isoforms play a role in the regulation of calcium channel activity and Ca(2+)-triggered neurotransmitter release at synapses and at neuromuscular junctions. They play an important role in Ca(2+)-triggered exocytosis of secretory granules in pituitary gland. They may affect their functions at synapses and in endocrine cells via their interactions with proteins from the exocytotic machinery. Likewise, alpha-type isoforms play a role in regulating the activity of postsynaptic NMDA receptors, a subtype of glutamate-gated ion channels. Both alpha-type and beta-type isoforms may play a role in the formation or maintenance of synaptic junctions via their interactions (via the extracellular domains) with neuroligin family members, CBLN1 or CBLN2. In vitro, triggers the de novo formation of presynaptic structures. May be involved in specification of excitatory synapses. Alpha-type isoforms were first identified as receptors for alpha-latrotoxin from spider venom. This chain is Neurexin-1 (Nrxn1), found in Rattus norvegicus (Rat).